The sequence spans 529 residues: Peptide chain release factor 3 (529 aa).

The region spanning 11-280 (ARRRTFAIIS…GLVEWAPSPM (270 aa)) is the tr-type G domain. GTP-binding positions include 20 to 27 (SHPDAGKT), 88 to 92 (DTPGH), and 142 to 145 (NKLD).

The protein belongs to the TRAFAC class translation factor GTPase superfamily. Classic translation factor GTPase family. PrfC subfamily.

It localises to the cytoplasm. Increases the formation of ribosomal termination complexes and stimulates activities of RF-1 and RF-2. It binds guanine nucleotides and has strong preference for UGA stop codons. It may interact directly with the ribosome. The stimulation of RF-1 and RF-2 is significantly reduced by GTP and GDP, but not by GMP. This is Peptide chain release factor 3 from Erwinia tasmaniensis (strain DSM 17950 / CFBP 7177 / CIP 109463 / NCPPB 4357 / Et1/99).